Reading from the N-terminus, the 284-residue chain is tRNA uridine(34) hydroxylase (284 aa).

The Rhodanese domain maps to 132–226 (TGRPVVMLDT…YFEEVGGAHY (95 aa)). Residue Cys-186 is the Cysteine persulfide intermediate of the active site.

Belongs to the TrhO family.

It catalyses the reaction uridine(34) in tRNA + AH2 + O2 = 5-hydroxyuridine(34) in tRNA + A + H2O. Catalyzes oxygen-dependent 5-hydroxyuridine (ho5U) modification at position 34 in tRNAs. This Burkholderia lata (strain ATCC 17760 / DSM 23089 / LMG 22485 / NCIMB 9086 / R18194 / 383) protein is tRNA uridine(34) hydroxylase.